A 90-amino-acid chain; its full sequence is Barrier-to-autointegration factor-like protein (90 aa).

As to quaternary structure, homodimer. Heterodimerizes with BANF1.

The protein localises to the nucleus. It localises to the cytoplasm. In terms of biological role, may play a role in BANF1 regulation and influence tissue-specific roles of BANF1. The protein is Barrier-to-autointegration factor-like protein (Banf2) of Mus musculus (Mouse).